We begin with the raw amino-acid sequence, 596 residues long: MEPELAAQKQPRPRRRSRRASGLSTEGATGPSADTSGSELDGRCSLRRGSSFTFLTPGPNWDFTLKRKRREKDDDVVSLSSLDLKEPSNKRVRPLARVTSLANLISPVRNGAVRRFGQTIQSFTLRGDHRSPASAQKFSSRSTVPTPAKRRSSALWSEMLDITMKESLTTREIRRQEAIYEMSRGEQDLIEDLKLARKAYHDPMLKLSIMSEEELTHIFGDLDSYIPLHEDLLTRIGEATKPDGTVEQIGHILVSWLPRLNAYRGYCSNQLAAKALLDQKKQDPRVQDFLQRCLESPFSRKLDLWSFLDIPRSRLVKYPLLLKEILKHTPKEHPDVQLLEDAILIIQGVLSDINLKKGESECQYYIDKLEYLDEKQRDPRIEASKVLLCHGELRSKSGHKLYIFLFQDILVLTRPVTRNERHSYQVYRQPIPVQELVLEDLQDGDVRMGGSFRGAFSNSEKAKNIFRIRFHDPSPAQSHTLQANDVFHKQQWFNCIRAAIAPFQSAGSPPELQGLPELHEECEGNHPSARKLTAQRRASTVSSVTQVEVDENAYRCGSGMQMAEDSKSLKTHQTQPGIRRARDKALSGGKRKETLV.

The residue at position 1 (Met-1) is an N-acetylmethionine. Residues 1–44 (MEPELAAQKQPRPRRRSRRASGLSTEGATGPSADTSGSELDGRC) are disordered. The segment at 1-74 (MEPELAAQKQ…LKRKRREKDD (74 aa)) is necessary for nuclear localization. Positions 12–19 (RPRRRSRR) match the Nuclear localization signal motif. 2 positions are modified to phosphoserine: Ser-21 and Ser-32. The span at 22–38 (GLSTEGATGPSADTSGS) shows a compositional bias: polar residues. Residues 66–72 (KRKRREK) carry the Nuclear localization signal motif. Ser-100, Ser-106, and Ser-122 each carry phosphoserine. The interval 127–146 (GDHRSPASAQKFSSRSTVPT) is disordered. A compositionally biased stretch (polar residues) spans 133–145 (ASAQKFSSRSTVP). The 183-residue stretch at 174–356 (RRQEAIYEMS…QGVLSDINLK (183 aa)) folds into the DH domain. Positions 386–501 (VLLCHGELRS…WFNCIRAAIA (116 aa)) constitute a PH domain. Ser-508 carries the post-translational modification Phosphoserine. The segment at 562 to 596 (MAEDSKSLKTHQTQPGIRRARDKALSGGKRKETLV) is disordered.

As to quaternary structure, interacts with RHOA in its GTP- and GDP-bound states, and with CDC42 in its GTP-bound state. Interacts with the PDZ 1 domain of BAIAP1. As to expression, widely expressed.

The protein localises to the cytoplasm. It localises to the nucleus. Acts as a guanine nucleotide exchange factor (GEF) for RhoA GTPase. May be involved in activation of the SAPK/JNK pathway Stimulates genotoxic stress-induced RHOB activity in breast cancer cells leading to their cell death. The polypeptide is Neuroepithelial cell-transforming gene 1 protein (NET1) (Homo sapiens (Human)).